Consider the following 441-residue polypeptide: Tol-Pal system protein TolB (441 aa).

Residues 1–39 form the signal peptide; the sequence is MPAMTPAFRRADLTGFLRTYGAALILLLAAMLAWQPAQA.

Belongs to the TolB family. As to quaternary structure, the Tol-Pal system is composed of five core proteins: the inner membrane proteins TolA, TolQ and TolR, the periplasmic protein TolB and the outer membrane protein Pal. They form a network linking the inner and outer membranes and the peptidoglycan layer.

The protein resides in the periplasm. Functionally, part of the Tol-Pal system, which plays a role in outer membrane invagination during cell division and is important for maintaining outer membrane integrity. The chain is Tol-Pal system protein TolB from Bordetella bronchiseptica (strain ATCC BAA-588 / NCTC 13252 / RB50) (Alcaligenes bronchisepticus).